Consider the following 230-residue polypeptide: Probable C4-dicarboxylate response regulator DctR (230 aa).

The region spanning 8–124 is the Response regulatory domain; sequence RVLLIEDDPM…RLKAALTQYE (117 aa). Aspartate 59 carries the 4-aspartylphosphate modification. Positions 183-209 form a DNA-binding region, H-T-H motif; that stretch reads EEIGRDVGLARVTVRRYLNYLESVGQV.

In terms of processing, phosphorylated by DctS.

It is found in the cytoplasm. In terms of biological role, member of the two-component regulatory system DctS/DctR. Essential for expression of DctP. The polypeptide is Probable C4-dicarboxylate response regulator DctR (dctR) (Halalkalibacterium halodurans (strain ATCC BAA-125 / DSM 18197 / FERM 7344 / JCM 9153 / C-125) (Bacillus halodurans)).